Consider the following 281-residue polypeptide: Fructose-bisphosphate aldolase class 1 (281 aa).

The active-site Schiff-base intermediate with dihydroxyacetone-P is Lys-191.

The protein belongs to the DeoC/FbaB aldolase family. Homooctamer.

Its subcellular location is the cytoplasm. The catalysed reaction is beta-D-fructose 1,6-bisphosphate = D-glyceraldehyde 3-phosphate + dihydroxyacetone phosphate. Activated by citrate. In Pyrococcus abyssi (strain GE5 / Orsay), this protein is Fructose-bisphosphate aldolase class 1 (fba).